The chain runs to 76 residues: U10-ctenitoxin-Pn1a (76 aa).

An N-terminal signal peptide occupies residues 1-15; that stretch reads SFVFYLFTLITVVRA. The propeptide occupies 16–36; sequence EEFILENEAEDIAPAVHGESG. 4 disulfide bridges follow: C39–C54, C46–C59, C53–C73, and C61–C71.

The protein belongs to the neurotoxin 02 (plectoxin) family. 09 subfamily. As to expression, expressed by the venom gland.

The protein localises to the secreted. The polypeptide is U10-ctenitoxin-Pn1a (Phoneutria nigriventer (Brazilian armed spider)).